The primary structure comprises 62 residues: Small ribosomal subunit protein eS27 (62 aa).

Zn(2+)-binding residues include Cys-17, Cys-20, Cys-36, and Cys-39. The C4-type zinc finger occupies 17 to 39 (CPDCDNEQTVFSKASTTVKCVVC).

Belongs to the eukaryotic ribosomal protein eS27 family. Part of the 30S ribosomal subunit. Zn(2+) serves as cofactor.

This is Small ribosomal subunit protein eS27 from Methanoregula boonei (strain DSM 21154 / JCM 14090 / 6A8).